The chain runs to 284 residues: Formamidopyrimidine-DNA glycosylase (284 aa).

The Schiff-base intermediate with DNA role is filled by Pro2. The active-site Proton donor is the Glu3. The Proton donor; for beta-elimination activity role is filled by Lys58. His101, Arg120, and Arg163 together coordinate DNA. The segment at 248–284 (RVYDRENAPCVTAGCPDVVRRVVQSGRSSFYCPSCQR) adopts an FPG-type zinc-finger fold. Arg274 serves as the catalytic Proton donor; for delta-elimination activity.

This sequence belongs to the FPG family. Monomer. Requires Zn(2+) as cofactor.

It carries out the reaction Hydrolysis of DNA containing ring-opened 7-methylguanine residues, releasing 2,6-diamino-4-hydroxy-5-(N-methyl)formamidopyrimidine.. The enzyme catalyses 2'-deoxyribonucleotide-(2'-deoxyribose 5'-phosphate)-2'-deoxyribonucleotide-DNA = a 3'-end 2'-deoxyribonucleotide-(2,3-dehydro-2,3-deoxyribose 5'-phosphate)-DNA + a 5'-end 5'-phospho-2'-deoxyribonucleoside-DNA + H(+). Functionally, involved in base excision repair of DNA damaged by oxidation or by mutagenic agents. Acts as a DNA glycosylase that recognizes and removes damaged bases. Has a preference for oxidized purines, such as 7,8-dihydro-8-oxoguanine (8-oxoG). Has AP (apurinic/apyrimidinic) lyase activity and introduces nicks in the DNA strand. Cleaves the DNA backbone by beta-delta elimination to generate a single-strand break at the site of the removed base with both 3'- and 5'-phosphates. The protein is Formamidopyrimidine-DNA glycosylase of Dinoroseobacter shibae (strain DSM 16493 / NCIMB 14021 / DFL 12).